The chain runs to 194 residues: Peptidyl-tRNA hydrolase (194 aa).

Tyr-16 provides a ligand contact to tRNA. The Proton acceptor role is filled by His-21. TRNA-binding residues include Phe-67, Asn-69, and Asn-115.

The protein belongs to the PTH family. As to quaternary structure, monomer.

The protein localises to the cytoplasm. The catalysed reaction is an N-acyl-L-alpha-aminoacyl-tRNA + H2O = an N-acyl-L-amino acid + a tRNA + H(+). In terms of biological role, hydrolyzes ribosome-free peptidyl-tRNAs (with 1 or more amino acids incorporated), which drop off the ribosome during protein synthesis, or as a result of ribosome stalling. Functionally, catalyzes the release of premature peptidyl moieties from peptidyl-tRNA molecules trapped in stalled 50S ribosomal subunits, and thus maintains levels of free tRNAs and 50S ribosomes. This Salmonella agona (strain SL483) protein is Peptidyl-tRNA hydrolase.